Consider the following 549-residue polypeptide: Oxygen-dependent choline dehydrogenase (549 aa).

4–33 (DFVIIGSGSAGSAMAYRLSEDGRYSVIVIE) provides a ligand contact to FAD. Catalysis depends on His-465, which acts as the Proton acceptor.

This sequence belongs to the GMC oxidoreductase family. FAD serves as cofactor.

The catalysed reaction is choline + A = betaine aldehyde + AH2. The enzyme catalyses betaine aldehyde + NAD(+) + H2O = glycine betaine + NADH + 2 H(+). The protein operates within amine and polyamine biosynthesis; betaine biosynthesis via choline pathway; betaine aldehyde from choline (cytochrome c reductase route): step 1/1. Its function is as follows. Involved in the biosynthesis of the osmoprotectant glycine betaine. Catalyzes the oxidation of choline to betaine aldehyde and betaine aldehyde to glycine betaine at the same rate. This chain is Oxygen-dependent choline dehydrogenase, found in Brucella melitensis biotype 1 (strain ATCC 23456 / CCUG 17765 / NCTC 10094 / 16M).